Reading from the N-terminus, the 491-residue chain is Cytosol aminopeptidase (491 aa).

2 residues coordinate Mn(2+): K263 and D268. K275 is an active-site residue. D286, D345, and E347 together coordinate Mn(2+). The active site involves R349.

Belongs to the peptidase M17 family. It depends on Mn(2+) as a cofactor.

The protein resides in the cytoplasm. It catalyses the reaction Release of an N-terminal amino acid, Xaa-|-Yaa-, in which Xaa is preferably Leu, but may be other amino acids including Pro although not Arg or Lys, and Yaa may be Pro. Amino acid amides and methyl esters are also readily hydrolyzed, but rates on arylamides are exceedingly low.. It carries out the reaction Release of an N-terminal amino acid, preferentially leucine, but not glutamic or aspartic acids.. Functionally, presumably involved in the processing and regular turnover of intracellular proteins. Catalyzes the removal of unsubstituted N-terminal amino acids from various peptides. This Haemophilus influenzae (strain ATCC 51907 / DSM 11121 / KW20 / Rd) protein is Cytosol aminopeptidase (pepA).